A 160-amino-acid chain; its full sequence is ATP synthase subunit b (160 aa).

A helical transmembrane segment spans residues 5–27 (IEQILTQIIAFLIMLGVLKKFVW).

Belongs to the ATPase B chain family. In terms of assembly, F-type ATPases have 2 components, F(1) - the catalytic core - and F(0) - the membrane proton channel. F(1) has five subunits: alpha(3), beta(3), gamma(1), delta(1), epsilon(1). F(0) has three main subunits: a(1), b(2) and c(10-14). The alpha and beta chains form an alternating ring which encloses part of the gamma chain. F(1) is attached to F(0) by a central stalk formed by the gamma and epsilon chains, while a peripheral stalk is formed by the delta and b chains.

It localises to the cell inner membrane. Functionally, f(1)F(0) ATP synthase produces ATP from ADP in the presence of a proton or sodium gradient. F-type ATPases consist of two structural domains, F(1) containing the extramembraneous catalytic core and F(0) containing the membrane proton channel, linked together by a central stalk and a peripheral stalk. During catalysis, ATP synthesis in the catalytic domain of F(1) is coupled via a rotary mechanism of the central stalk subunits to proton translocation. In terms of biological role, component of the F(0) channel, it forms part of the peripheral stalk, linking F(1) to F(0). This is ATP synthase subunit b from Protochlamydia amoebophila (strain UWE25).